Consider the following 87-residue polypeptide: CRISPR-associated endoribonuclease Cas2 (87 aa).

Residue aspartate 8 participates in Mg(2+) binding.

The protein belongs to the CRISPR-associated endoribonuclease Cas2 protein family. Homodimer, forms a heterotetramer with a Cas1 homodimer. The cofactor is Mg(2+).

In terms of biological role, CRISPR (clustered regularly interspaced short palindromic repeat), is an adaptive immune system that provides protection against mobile genetic elements (viruses, transposable elements and conjugative plasmids). CRISPR clusters contain sequences complementary to antecedent mobile elements and target invading nucleic acids. CRISPR clusters are transcribed and processed into CRISPR RNA (crRNA). Functions as a ssRNA-specific endoribonuclease. Involved in the integration of spacer DNA into the CRISPR cassette. This chain is CRISPR-associated endoribonuclease Cas2, found in Dictyoglomus turgidum (strain DSM 6724 / Z-1310).